Consider the following 673-residue polypeptide: Auxin response factor 9 (673 aa).

Positions 126-228 form a DNA-binding region, TF-B3; sequence FCKTLTASDT…ELRVGVRRLM (103 aa). Disordered regions lie at residues 356 to 386 and 514 to 545; these read ELEP…PSVV and DSDQ…QSRQ. Residues 516 to 545 show a composition bias toward polar residues; it reads DQISQPSNGNKSDAPGTSSERSPLESQSRQ. The PB1 domain occupies 547–639; it reads RSCTKVIMQG…EEAKLLAPKS (93 aa).

The protein belongs to the ARF family. In terms of assembly, homodimers and heterodimers. Expressed in roots, culms, leaves and young panicles.

The protein localises to the nucleus. Functionally, auxin response factors (ARFs) are transcriptional factors that bind specifically to the DNA sequence 5'-TGTCTC-3' found in the auxin-responsive promoter elements (AuxREs). The chain is Auxin response factor 9 (ARF9) from Oryza sativa subsp. japonica (Rice).